We begin with the raw amino-acid sequence, 182 residues long: Protein GrpE (182 aa).

Positions 1-35 (MTQENQTPPPEQENLAADPAVETTAETPAVKTPEQ) are disordered.

This sequence belongs to the GrpE family. As to quaternary structure, homodimer.

The protein localises to the cytoplasm. Participates actively in the response to hyperosmotic and heat shock by preventing the aggregation of stress-denatured proteins, in association with DnaK and GrpE. It is the nucleotide exchange factor for DnaK and may function as a thermosensor. Unfolded proteins bind initially to DnaJ; upon interaction with the DnaJ-bound protein, DnaK hydrolyzes its bound ATP, resulting in the formation of a stable complex. GrpE releases ADP from DnaK; ATP binding to DnaK triggers the release of the substrate protein, thus completing the reaction cycle. Several rounds of ATP-dependent interactions between DnaJ, DnaK and GrpE are required for fully efficient folding. The sequence is that of Protein GrpE from Polynucleobacter necessarius subsp. necessarius (strain STIR1).